The following is a 478-amino-acid chain: Ankyrin repeat and BTB/POZ domain-containing protein 1 (478 aa).

ANK repeat units lie at residues 1–31 (MDTS…EVNV) and 35–64 (WDST…RCEA). BTB domains lie at 115 to 182 (SDVV…DIGV) and 272 to 346 (PDIC…ELPP). Positions 450–478 (TVQTYSAIEEAQQQLRALENLLVSIGLDC) form a coiled coil.

It localises to the cytoplasm. In terms of biological role, may act as a mediator of the PTEN growth-suppressive signaling pathway. May play a role in developmental processes. This is Ankyrin repeat and BTB/POZ domain-containing protein 1 from Rattus norvegicus (Rat).